The chain runs to 259 residues: Protein snail homolog Sna (259 aa).

Residues 1–20 (MPRSFLVKKHFSASKKPNYS) form an SNAG domain region. The disordered stretch occupies residues 71-113 (DYKKSPISPSSSDDSSKPLDLTSFSSEDEGGKTSDPPSPASSA). 5 consecutive C2H2-type zinc fingers follow at residues 119–141 (FQCN…KQLH), 150–172 (FSCK…IRSH), 176–198 (CVCK…IRTH), 204–226 (FSCT…LQTH), and 232–255 (YQCK…ETGC).

The protein belongs to the snail C2H2-type zinc-finger protein family. In terms of assembly, interacts (via SNAG domain) with limd1 (via LIM domains), wtip (via LIM domains) and ajuba (via LIM domains). Interacts with elp3; the interaction inhibits snai1 ubiquitination and promotes snai1 stability. Post-translationally, ubiquitinated. As to expression, maternal expression is nearly completely restricted to the vegetal hemisphere. Zygotic expression begins in the dorsal marginal zone just before gastrulation (stage 9), and is almost completely absent in the animal hemisphere. At mid-gastrula (stage 11-11.5), expression begins in the ectoderm in an arc surrounding the prospective neural plate. From stage 12, anterior expression is down-regulated, while levels are increased in the prospective neural crest.

It is found in the nucleus. Transcriptional repressor. Acts upstream of snai2/slug, zic5 and other neural crest markers in the specification of the neural crest and neural crest migration. Involved in embryonic mesoderm formation. The sequence is that of Protein snail homolog Sna (snai1) from Xenopus laevis (African clawed frog).